Reading from the N-terminus, the 1188-residue chain is Probable RNA helicase armi (1188 aa).

723–730 (GPPGSGKT) serves as a coordination point for ATP. Positions 862 to 865 (DEAG) match the DEAG box motif.

Belongs to the DNA2/NAM7 helicase family. SDE3 subfamily. As to quaternary structure, forms a complex with piwi and fs(1)Yb; this interaction is required for proper piRNA loading and nuclear localization of piwi. The interaction of piwi and fs(1)Yb is likely to occur via armi. Abundant in oocytes and syncytial blastoderm. Expressed at low level throughout development, including somatic tissues. First apparent early in oogenesis, in the cytoplasm of stem cells and mitotically dividing cystoblasts. In regions 2a and 2b of the germarium, it is most concentrated in the center of the germline cysts, where the pro-oocyte is located. In stage 1 and early stage 2 egg chambers, it accumulates at the anterior of the oocyte, near the ring canals. It also extends through the ring canals forming a branched structure that links the early oocyte with adjacent nurse cells. In stage 3 cysts, it accumulates at the posterior cortex and localizes to extensions that pass through the oocyte into the nurse cells. Through stages 4 to 7, it continues to be somewhat enriched at the posterior cortex of the oocyte, but at significantly lower level. In stage 9 to 10 egg chambers, it is found throughout the cytoplasm of the oocyte and nurse cells, with slight enrichment at the oocyte cortex.

The protein localises to the cytoplasm. The catalysed reaction is ATP + H2O = ADP + phosphate + H(+). Its function is as follows. Probable RNA helicase required for axial polarization of the oocyte during early and mid oogenesis. Plays a central role in RNA interference (RNAi) process, a process that mediates mRNA destruction of translational repression. Required for the assembly of the RISC complex, a complex required for target RNA destruction or repression. May be required in the RISC assembly to unwind miRNAs, in the production of single-stranded miRNA from the double-stranded miRNA, a key step in RISC formation. Required both for the translational control of oskar (osk) mRNA and cytoskeletal polarization in the oocyte. Required for somatic primary piRNA biogenesis. Involved in repression of long interspersed nuclear elements (LINEs) including HeT-A, I-element and TART LINEs. The polypeptide is Probable RNA helicase armi (Drosophila melanogaster (Fruit fly)).